The primary structure comprises 282 residues: Putative 4-diphosphocytidyl-2-C-methyl-D-erythritol kinase (282 aa).

The active site involves Lys-9. 93–103 (PVSAGLAGGSA) contacts ATP. Residue Asp-135 is part of the active site.

The protein belongs to the GHMP kinase family. IspE subfamily.

The catalysed reaction is 4-CDP-2-C-methyl-D-erythritol + ATP = 4-CDP-2-C-methyl-D-erythritol 2-phosphate + ADP + H(+). Functionally, catalyzes the phosphorylation of the position 2 hydroxy group of 4-diphosphocytidyl-2C-methyl-D-erythritol. The chain is Putative 4-diphosphocytidyl-2-C-methyl-D-erythritol kinase from Staphylococcus aureus (strain MRSA252).